Reading from the N-terminus, the 321-residue chain is MSTNSIKLLASDVHRGLAELVSKRLGLRLTPSELKRESTGEVQFSIGESVRDEDIFIICQIGSGEVNDRVFELMIMINACKTASARRITVILPNFPYARQDRKDKSRAPITAKLMADMLTTAGCDHVITMDLHASQIQGFFDVPVDNLYAEPSVVRYIKETIDYSEAIIISSDAGGAKRAAGLADRLDLNFELIHKERARANEVSRMVLVVDVTDKICVIVDDMADTCGTLAKAAEVLLDNNAKDVIAIVTHGILSGNAIKNINNSKLKKVVCTNTVPFEDKLKLCLKLDTIDISAVIAESIRRLHNGESISYLFKNAPCK.

Asp131, His133, Asp142, and Asp146 together coordinate Mg(2+).

This sequence belongs to the ribose-phosphate pyrophosphokinase family.

It catalyses the reaction D-ribose 5-phosphate + ATP = 5-phospho-alpha-D-ribose 1-diphosphate + AMP + H(+). In Candida albicans (Yeast), this protein is Ribose-phosphate pyrophosphokinase 1 (PRS1).